A 431-amino-acid polypeptide reads, in one-letter code: Enolase (431 aa).

Q175 lines the (2R)-2-phosphoglycerate pocket. E217 acts as the Proton donor in catalysis. Mg(2+)-binding residues include D254, E295, and D322. The (2R)-2-phosphoglycerate site is built by K347, R376, S377, and K398. K347 serves as the catalytic Proton acceptor.

Belongs to the enolase family. It depends on Mg(2+) as a cofactor.

The protein resides in the cytoplasm. It is found in the secreted. The protein localises to the cell surface. It carries out the reaction (2R)-2-phosphoglycerate = phosphoenolpyruvate + H2O. The protein operates within carbohydrate degradation; glycolysis; pyruvate from D-glyceraldehyde 3-phosphate: step 4/5. Its function is as follows. Catalyzes the reversible conversion of 2-phosphoglycerate (2-PG) into phosphoenolpyruvate (PEP). It is essential for the degradation of carbohydrates via glycolysis. The sequence is that of Enolase from Anaplasma marginale (strain St. Maries).